We begin with the raw amino-acid sequence, 234 residues long: Biosynthetic peptidoglycan transglycosylase (234 aa).

A helical membrane pass occupies residues 8–28 (VIGCFAAGVVALNLYFFAAIA).

It belongs to the glycosyltransferase 51 family.

The protein localises to the cell inner membrane. The enzyme catalyses [GlcNAc-(1-&gt;4)-Mur2Ac(oyl-L-Ala-gamma-D-Glu-L-Lys-D-Ala-D-Ala)](n)-di-trans,octa-cis-undecaprenyl diphosphate + beta-D-GlcNAc-(1-&gt;4)-Mur2Ac(oyl-L-Ala-gamma-D-Glu-L-Lys-D-Ala-D-Ala)-di-trans,octa-cis-undecaprenyl diphosphate = [GlcNAc-(1-&gt;4)-Mur2Ac(oyl-L-Ala-gamma-D-Glu-L-Lys-D-Ala-D-Ala)](n+1)-di-trans,octa-cis-undecaprenyl diphosphate + di-trans,octa-cis-undecaprenyl diphosphate + H(+). It functions in the pathway cell wall biogenesis; peptidoglycan biosynthesis. In terms of biological role, peptidoglycan polymerase that catalyzes glycan chain elongation from lipid-linked precursors. This Ralstonia nicotianae (strain ATCC BAA-1114 / GMI1000) (Ralstonia solanacearum) protein is Biosynthetic peptidoglycan transglycosylase.